A 319-amino-acid polypeptide reads, in one-letter code: uncharacterized protein (319 aa).

This is an uncharacterized protein from Ictalurid herpesvirus 1 (strain Auburn) (IcHV-1).